Reading from the N-terminus, the 461-residue chain is Nuclear distribution protein PAC1 (461 aa).

Positions 9–41 (QAEELHKSIIAYLTANNLLDTANTLRAELNLNE) constitute a LisH domain. Positions 61–88 (TSVVRLQKKIMDLESRMSAMQAELDNAT) form a coiled coil. 8 WD repeats span residues 114-155 (SHRD…RTIK), 157-197 (HTRA…KNIR), 201-248 (GHDH…CLRT), 251-290 (GHTA…PETK), 312-355 (QYLS…LLTL), 357-396 (GHDN…KCIK), 401-446 (AHER…IRCV), and 448-461 (ATGG…IFAN).

Belongs to the WD repeat LIS1/nudF family. Self-associates. Interacts with NDL1 and dynein.

The protein localises to the cytoplasm. It localises to the cytoskeleton. The protein resides in the spindle pole. Functionally, positively regulates the activity of the minus-end directed microtubule motor protein dynein. May enhance dynein-mediated microtubule sliding by targeting dynein to the microtubule plus end. Required for nuclear migration during vegetative growth as well as development. Required for retrograde early endosome (EE) transport from the hyphal tip. Required for localization of dynein to the mitotic spindle poles. Recruits additional proteins to the dynein complex at SPBs. The sequence is that of Nuclear distribution protein PAC1 from Arthroderma benhamiae (strain ATCC MYA-4681 / CBS 112371) (Trichophyton mentagrophytes).